The primary structure comprises 251 residues: Protein CMS1 (251 aa).

Residues 1-37 (MSLDNDINTKKRKLQDDEKPRKKRKHKRPTRDDDADL) form a disordered region.

The protein belongs to the CMS1 family.

It localises to the nucleus. Functionally, may play a role in the regulation of DNA replication and cell cycle control. In Chaetomium thermophilum (strain DSM 1495 / CBS 144.50 / IMI 039719) (Thermochaetoides thermophila), this protein is Protein CMS1 (CSM1).